Consider the following 95-residue polypeptide: Ubiquinol-cytochrome-c reductase complex assembly factor 3 (95 aa).

Over 1–7 (MTTLRKL) the chain is Mitochondrial matrix. Residues 8–28 (LLVGALLGAGAGVGTALFALV) form a helical membrane-spanning segment. A mediates lipid-binding region spans residues 23-80 (ALFALVTPGEERKQAMLKEMPEQYPQRRDEAARTKELLLATLQEAAATQENVAWRKNW). At 29 to 95 (TPGEERKQAM…GGGGGGGRSA (67 aa)) the chain is on the mitochondrial intermembrane side.

It belongs to the UQCC3 family. As to quaternary structure, associates with the ubiquinol-cytochrome c reductase complex (mitochondrial respiratory chain complex III(CIII) or cytochrome b-c1 complex). Interacts with UQCC1. Forms a complex, named COMC, composed of UQCC1, UQCC2; UQCC3 and UQCC4; mediates MT-CYB hemylation and association with the first nuclear-encoded complex III subunit UQCRQ. Post-translationally, probably cleaved by OMA1 under mitochondrial stress conditions.

The protein resides in the mitochondrion inner membrane. Functionally, required for the assembly of the ubiquinol-cytochrome c reductase complex (mitochondrial respiratory chain complex III or cytochrome b-c1 complex), mediating cytochrome b recruitment and probably stabilization within the complex. Thereby, plays an important role in ATP production by mitochondria. Cardiolipin-binding protein, it may also control the cardiolipin composition of mitochondria membranes and their morphology. The polypeptide is Ubiquinol-cytochrome-c reductase complex assembly factor 3 (Bos taurus (Bovine)).